Reading from the N-terminus, the 373-residue chain is Chaperone protein DnaJ (373 aa).

Positions 5 to 70 (DYYEVLGVNR…QKRAAYDQYG (66 aa)) constitute a J domain. The segment at 133-211 (GTETKIRIPV…CHGGGRVKQH (79 aa)) adopts a CR-type zinc-finger fold. Cys-146, Cys-149, Cys-163, Cys-166, Cys-185, Cys-188, Cys-199, and Cys-202 together coordinate Zn(2+). CXXCXGXG motif repeat units follow at residues 146–153 (CETCHGSG), 163–170 (CSTCGGHG), 185–192 (CPKCHGSG), and 199–206 (CPTCHGGG). Residues 346–373 (LEDINQQDSGKHSPREKSWMTKVKDFFQ) form a disordered region. A compositionally biased stretch (basic and acidic residues) spans 354–373 (SGKHSPREKSWMTKVKDFFQ).

The protein belongs to the DnaJ family. In terms of assembly, homodimer. Zn(2+) serves as cofactor.

The protein localises to the cytoplasm. In terms of biological role, participates actively in the response to hyperosmotic and heat shock by preventing the aggregation of stress-denatured proteins and by disaggregating proteins, also in an autonomous, DnaK-independent fashion. Unfolded proteins bind initially to DnaJ; upon interaction with the DnaJ-bound protein, DnaK hydrolyzes its bound ATP, resulting in the formation of a stable complex. GrpE releases ADP from DnaK; ATP binding to DnaK triggers the release of the substrate protein, thus completing the reaction cycle. Several rounds of ATP-dependent interactions between DnaJ, DnaK and GrpE are required for fully efficient folding. Also involved, together with DnaK and GrpE, in the DNA replication of plasmids through activation of initiation proteins. The protein is Chaperone protein DnaJ of Methylobacillus flagellatus (strain ATCC 51484 / DSM 6875 / VKM B-1610 / KT).